A 499-amino-acid polypeptide reads, in one-letter code: MAAPEPAPRRGREREREDESEDESDILEESPCGRWQKRREQVNQGNMPGIQSTFLAMDTEEGVEVVWNELHFGDRKAFAAHEEKIQTMFEQLALVDHPNIVKLHKYWLDASEARARVIFITEYVSSGSLKQFLKKTKKNHKAMNARAWKRWCTQILSALSFLHACSPPIIHGNLTSDTIFIQHNGLIKIGSVWYRIFSNALPDDLRSPIRAEREELRNLHFFPPEYGEVNDGTAVDIFSFGMCALEMAVLEIQANGDTRVTEEAIARARHSLSDPNMREFILSCLARDPARRPSAHNLLFHRVLFEVHSLKLLAAHCFIQHQYLMPENVVEEKTKAMDLHAVLAEMPQPHGPPMQWRYSEVSFLELDKFLEDVRNGIYPLMNFAAARPLGLPRVLAPPPEEAQKAKTPTPEPFDSETRKVVQMQCNLERSEDKARWHLTLLLVLEDRLHRQLTYDLLPTDSAQDLAAELVHYGFLHEDDRTKLAAFLETTFLKYRGTQA.

The interval 1–31 (MAAPEPAPRRGREREREDESEDESDILEESP) is disordered. The segment covering 7–17 (APRRGRERERE) has biased composition (basic and acidic residues). Positions 18–28 (DESEDESDILE) are enriched in acidic residues. One can recognise a Protein kinase domain in the interval 36-304 (QKRREQVNQG…AHNLLFHRVL (269 aa)). Residues 396–416 (APPPEEAQKAKTPTPEPFDSE) form a disordered region. Phosphothreonine occurs at positions 407 and 409.

Belongs to the protein kinase superfamily. Ser/Thr protein kinase family. As to expression, expressed in Purkinje cells of the cerebellum and neurons in the CA3 region of the hippocampus. Also detected in non-neural tissues including mesenchymal layer adjacent to epithelium in developing bronchi of the lung, the epithelium of the stomach as well as cells in the liver.

The protein localises to the cytoplasm. May regulate apoptosis of neural progenitor cells during their differentiation. This Mus musculus (Mouse) protein is Nuclear receptor-binding protein 2.